The primary structure comprises 271 residues: 2,3,4,5-tetrahydropyridine-2,6-dicarboxylate N-succinyltransferase (271 aa).

Arg102 and Asp139 together coordinate substrate.

The protein belongs to the transferase hexapeptide repeat family. As to quaternary structure, homotrimer.

Its subcellular location is the cytoplasm. It catalyses the reaction (S)-2,3,4,5-tetrahydrodipicolinate + succinyl-CoA + H2O = (S)-2-succinylamino-6-oxoheptanedioate + CoA. It functions in the pathway amino-acid biosynthesis; L-lysine biosynthesis via DAP pathway; LL-2,6-diaminopimelate from (S)-tetrahydrodipicolinate (succinylase route): step 1/3. This Coxiella burnetii (strain Dugway 5J108-111) protein is 2,3,4,5-tetrahydropyridine-2,6-dicarboxylate N-succinyltransferase.